The following is a 147-amino-acid chain: Probable flagellum biosynthesis repressor protein FlbT (147 aa).

This sequence belongs to the FlbT family.

Its function is as follows. Has a post-transcriptional repressor function in flagellum biogenesis. Associates with the 5'-UTR of fljK mRNA and promotes its degradation. This chain is Probable flagellum biosynthesis repressor protein FlbT, found in Mesorhizobium japonicum (strain LMG 29417 / CECT 9101 / MAFF 303099) (Mesorhizobium loti (strain MAFF 303099)).